Reading from the N-terminus, the 590-residue chain is MPLKQRVSSEKTGAFALLDSIVRHGVKHIFGYPGGAILPIYDELYAWEEASLIKHILVRHEQGAAHAADSYSRSTGEVGVCFATSGPGATNLVSGIATAHIDSVPILAITGQVGRAFIGTDAFQEVDIFGITLPIVKHSYVVRDPRDMSRIVAEAFFICKHGRPGPVLIDVPKDVGLEKFNYFSVEPGKVNIPGCRPITSLKSRQILMAAKMIQQSSQPLLYIGGGAIISDSHQIIKELVDFYKIPVTTTLMGKGIFNEDSDYCLGMLGMHGTAYANFAVSECDLLIALGARFDDRVTGKLDEFACNAQVIHVDIDPAEVGKNRIPQVAIVGDVAEVVSEILNLLKTSFPPYPEQIISWQERINRWRQQYPLLVPRKSTSISPQVILVATNKLAQNAYFTTDVGQHQMWSAQFLKVKAKHWLSSAGLGTMGYGLPAAIGAQVAHPNDVVICISGDSSFQMNMQELGTIAQYQLPVKIIIINNRWQGMVRQWQQAFYGERYSHSRMTEGAPDFQKLAEAFGIKAFTINNRQNMQSALQVAIDYPGPVLLDCQVTENENCYPMVAPGKSNAQMIGIAKPQRGTASNYINNSV.

Glutamate 61 contributes to the thiamine diphosphate binding site. FAD contacts are provided by residues arginine 163, histidine 271–arginine 292, and aspartate 314–aspartate 333. A thiamine pyrophosphate binding region spans residues glutamine 405–tryptophan 484. The Mg(2+) site is built by aspartate 455 and asparagine 482.

It belongs to the TPP enzyme family. Dimer of large and small chains. Mg(2+) is required as a cofactor. The cofactor is thiamine diphosphate.

Its subcellular location is the plastid. The protein resides in the chloroplast. It catalyses the reaction 2 pyruvate + H(+) = (2S)-2-acetolactate + CO2. Its pathway is amino-acid biosynthesis; L-isoleucine biosynthesis; L-isoleucine from 2-oxobutanoate: step 1/4. The protein operates within amino-acid biosynthesis; L-valine biosynthesis; L-valine from pyruvate: step 1/4. This is Acetolactate synthase large subunit (ilvB) from Pyropia yezoensis (Susabi-nori).